Reading from the N-terminus, the 443-residue chain is Thymidine phosphorylase (443 aa).

Belongs to the thymidine/pyrimidine-nucleoside phosphorylase family. In terms of assembly, homodimer.

It catalyses the reaction thymidine + phosphate = 2-deoxy-alpha-D-ribose 1-phosphate + thymine. It functions in the pathway pyrimidine metabolism; dTMP biosynthesis via salvage pathway; dTMP from thymine: step 1/2. Functionally, the enzymes which catalyze the reversible phosphorolysis of pyrimidine nucleosides are involved in the degradation of these compounds and in their utilization as carbon and energy sources, or in the rescue of pyrimidine bases for nucleotide synthesis. This chain is Thymidine phosphorylase, found in Shewanella piezotolerans (strain WP3 / JCM 13877).